The chain runs to 251 residues: Triosephosphate isomerase 1 (251 aa).

9–11 serves as a coordination point for substrate; the sequence is NWK. The active-site Electrophile is His-95. Glu-167 serves as the catalytic Proton acceptor. Substrate is bound by residues Gly-173, Ser-213, and 234 to 235; that span reads GG.

The protein belongs to the triosephosphate isomerase family. In terms of assembly, homodimer.

It localises to the cytoplasm. The enzyme catalyses D-glyceraldehyde 3-phosphate = dihydroxyacetone phosphate. The protein operates within carbohydrate biosynthesis; gluconeogenesis. It functions in the pathway carbohydrate degradation; glycolysis; D-glyceraldehyde 3-phosphate from glycerone phosphate: step 1/1. In terms of biological role, involved in the gluconeogenesis. Catalyzes stereospecifically the conversion of dihydroxyacetone phosphate (DHAP) to D-glyceraldehyde-3-phosphate (G3P). The polypeptide is Triosephosphate isomerase 1 (Listeria innocua serovar 6a (strain ATCC BAA-680 / CLIP 11262)).